The following is a 483-amino-acid chain: Probable glycine dehydrogenase (decarboxylating) subunit 2 (483 aa).

The interval methionine 1–arginine 33 is disordered. An N6-(pyridoxal phosphate)lysine modification is found at lysine 264.

It belongs to the GcvP family. C-terminal subunit subfamily. In terms of assembly, the glycine cleavage system is composed of four proteins: P, T, L and H. In this organism, the P 'protein' is a heterodimer of two subunits. It depends on pyridoxal 5'-phosphate as a cofactor.

It catalyses the reaction N(6)-[(R)-lipoyl]-L-lysyl-[glycine-cleavage complex H protein] + glycine + H(+) = N(6)-[(R)-S(8)-aminomethyldihydrolipoyl]-L-lysyl-[glycine-cleavage complex H protein] + CO2. In terms of biological role, the glycine cleavage system catalyzes the degradation of glycine. The P protein binds the alpha-amino group of glycine through its pyridoxal phosphate cofactor; CO(2) is released and the remaining methylamine moiety is then transferred to the lipoamide cofactor of the H protein. The polypeptide is Probable glycine dehydrogenase (decarboxylating) subunit 2 (Nitrosomonas europaea (strain ATCC 19718 / CIP 103999 / KCTC 2705 / NBRC 14298)).